Consider the following 301-residue polypeptide: Glycine--tRNA ligase alpha subunit (301 aa).

The protein belongs to the class-II aminoacyl-tRNA synthetase family. As to quaternary structure, tetramer of two alpha and two beta subunits.

It localises to the cytoplasm. The catalysed reaction is tRNA(Gly) + glycine + ATP = glycyl-tRNA(Gly) + AMP + diphosphate. This Shewanella oneidensis (strain ATCC 700550 / JCM 31522 / CIP 106686 / LMG 19005 / NCIMB 14063 / MR-1) protein is Glycine--tRNA ligase alpha subunit.